A 264-amino-acid chain; its full sequence is Glutamate racemase (264 aa).

Substrate is bound by residues 10-11 and 42-43; these read DS and YG. The Proton donor/acceptor role is filled by C73. 74–75 lines the substrate pocket; that stretch reads NT. The Proton donor/acceptor role is filled by C183. 184-185 is a substrate binding site; sequence TH.

This sequence belongs to the aspartate/glutamate racemases family.

The catalysed reaction is L-glutamate = D-glutamate. Its pathway is cell wall biogenesis; peptidoglycan biosynthesis. Functionally, provides the (R)-glutamate required for cell wall biosynthesis. In Streptococcus sanguinis (strain SK36), this protein is Glutamate racemase.